The primary structure comprises 770 residues: Kinesin-like protein klpA (770 aa).

The disordered stretch occupies residues 1-152 (MENVQSRMQG…GLGKRGEWDQ (152 aa)). The span at 85–105 (SSTLTRSASAASRPRGPLSSS) shows a compositional bias: low complexity. Residues 106-119 (TSGRPKTSMSTSRR) show a composition bias toward polar residues. The span at 134 to 152 (THQEERSYGGLGKRGEWDQ) shows a compositional bias: basic and acidic residues. Residues 175-425 (QESSGLKDAL…QELKGNIRVF (251 aa)) adopt a coiled-coil conformation. Residues 421–756 (NIRVFCRVRP…LKFATKVHNT (336 aa)) enclose the Kinesin motor domain. An ATP-binding site is contributed by 514–521 (GQTGSGKT).

It belongs to the TRAFAC class myosin-kinesin ATPase superfamily. Kinesin family. NCD subfamily.

It is found in the cytoplasm. Its subcellular location is the cytoskeleton. In Emericella nidulans (strain FGSC A4 / ATCC 38163 / CBS 112.46 / NRRL 194 / M139) (Aspergillus nidulans), this protein is Kinesin-like protein klpA (klpA).